Reading from the N-terminus, the 255-residue chain is uncharacterized protein (255 aa).

A signal peptide spans 1-23 (MKRLNKLVLGIIFLFLVISITAG). Cysteine 24 is lipidated: N-palmitoyl cysteine. The S-diacylglycerol cysteine moiety is linked to residue cysteine 24.

It belongs to the staphylococcal tandem lipoprotein family.

The protein resides in the cell membrane. This is an uncharacterized protein from Staphylococcus aureus (strain Mu50 / ATCC 700699).